The chain runs to 672 residues: Poly-beta-1,6-N-acetyl-D-glucosamine N-deacetylase (672 aa).

Positions 1 to 20 (MLRNGNKYLLMLVSIIMLTA) are cleaved as a signal peptide. Cys21 is lipidated: N-palmitoyl cysteine. Cys21 carries the S-diacylglycerol cysteine lipid modification. In terms of domain architecture, NodB homology spans 107-349 (KAVVLTFDDG…IQRVKDMQIS (243 aa)).

This sequence belongs to the polysaccharide deacetylase family.

The protein resides in the cell outer membrane. Catalyzes the N-deacetylation of poly-beta-1,6-N-acetyl-D-glucosamine (PGA), a biofilm adhesin polysaccharide. N-deacetylation promotes PGA export through the PgaA porin. The protein is Poly-beta-1,6-N-acetyl-D-glucosamine N-deacetylase (pgaB) of Escherichia coli O157:H7.